A 1357-amino-acid chain; its full sequence is DNA-directed RNA polymerase subunit beta (1357 aa).

Belongs to the RNA polymerase beta chain family. In terms of assembly, the RNAP catalytic core consists of 2 alpha, 1 beta, 1 beta' and 1 omega subunit. When a sigma factor is associated with the core the holoenzyme is formed, which can initiate transcription.

It catalyses the reaction RNA(n) + a ribonucleoside 5'-triphosphate = RNA(n+1) + diphosphate. Its function is as follows. DNA-dependent RNA polymerase catalyzes the transcription of DNA into RNA using the four ribonucleoside triphosphates as substrates. The chain is DNA-directed RNA polymerase subunit beta from Pseudomonas paraeruginosa (strain DSM 24068 / PA7) (Pseudomonas aeruginosa (strain PA7)).